A 654-amino-acid polypeptide reads, in one-letter code: MICOS complex subunit MIC60-2 (654 aa).

Residues 1 to 12 (MRGSRNLLTQRL) constitute a mitochondrion transit peptide. The Mitochondrial matrix portion of the chain corresponds to 13–20 (ASSRATGS). A helical transmembrane segment spans residues 21 to 43 (SGGLKFVGATVGAVTAGAAGVAG). Over 44 to 654 (YASYDNEFRK…AALTSIRSTY (611 aa)) the chain is Mitochondrial intermembrane. Residues 115-129 (LKETTEPKKIEKKPE) show a composition bias toward basic and acidic residues. The interval 115-140 (LKETTEPKKIEKKPENPYIGAKTPLN) is disordered.

It belongs to the MICOS complex subunit Mic60 family. In terms of assembly, component of the mitochondrial contact site and cristae organizing system (MICOS) complex. In terms of tissue distribution, expressed in the gonads and muscle cells.

It is found in the mitochondrion inner membrane. Its subcellular location is the cytoplasm. Sustains mitochondrial morphology probably through maintaining cristae morphology. May act as a component of the MICOS complex, a large protein complex of the mitochondria. The polypeptide is MICOS complex subunit MIC60-2 (Caenorhabditis elegans).